Consider the following 541-residue polypeptide: Phenazine N-monooxygenase PhzNO1 (541 aa).

Residues D39, 47–50, 59–60, Y65, and I112 contribute to the FAD site; these read TWYW and DT. Position 57-59 (57-59) interacts with NADP(+); the sequence is RAD. Residues 186-192, 209-210, and W492 each bind NADP(+); these read TGSTGVQ and RS.

This sequence belongs to the FAD-binding monooxygenase family. FAD serves as cofactor.

The enzyme catalyses 1,6-dihydroxyphenazine + NADPH + O2 = 1,6-dihydroxyphenazine N(5)-oxide + NADP(+) + H2O. It carries out the reaction 1,6-dihydroxyphenazine N(5)-oxide + NADPH + O2 = 1,6-dihydroxyphenazine N(5),N(10)-dioxide + NADP(+) + H2O. It catalyses the reaction 1-hydroxy-6-methoxyphenazine + NADPH + O2 = 1-hydroxy-6-methoxyphenazine N(10)-oxide + NADP(+) + H2O. The catalysed reaction is quinolin-8-ol + NADPH + O2 = 8-hydroxyquinoline N-oxide + NADP(+) + H2O. Involved in the biosynthesis of phenazine natural products including myxin, an N(5),N(10)-dioxide phenazine antiobiotic, which has antimicrobial activity. Catalyzes the aromatic N-oxidations of phenazines, such as 1,6-dihydroxyphenazine (DHP), 1,6-dihydroxyphenazine N(5)-oxide (DHPO) and 1-hydroxy-6-methoxyphenazine to produce DHPO, iodinin (1,6-dihydroxyphenazine N(5),N(10)-dioxide) and 1-hydroxy-6-methoxyphenazine N(10)-oxide, respectively. Also catalyzes the N-oxidation of 8-hydroxyquinoline, but not 6-hydroxyquinoline (6-HQ), quinoline, quinoxaline, quinine and 2-phenylpyridine. This chain is Phenazine N-monooxygenase PhzNO1, found in Lysobacter antibioticus.